A 327-amino-acid chain; its full sequence is Probable cell division protein WhiA (327 aa).

Residues 275–308 constitute a DNA-binding region (H-T-H motif); the sequence is SLEELGRLADPQMTKDAVAGRIRRLLTTADKRAR.

It belongs to the WhiA family.

Its function is as follows. Involved in cell division and chromosome segregation. The protein is Probable cell division protein WhiA of Corynebacterium efficiens (strain DSM 44549 / YS-314 / AJ 12310 / JCM 11189 / NBRC 100395).